The sequence spans 161 residues: Ubiquitin-conjugating enzyme 15 (161 aa).

Residues 15–161 (IACNRLQKEL…TRWWFHDDKV (147 aa)) form the UBC core domain. Cys-99 (glycyl thioester intermediate) is an active-site residue.

It belongs to the ubiquitin-conjugating enzyme family.

It carries out the reaction S-ubiquitinyl-[E1 ubiquitin-activating enzyme]-L-cysteine + [E2 ubiquitin-conjugating enzyme]-L-cysteine = [E1 ubiquitin-activating enzyme]-L-cysteine + S-ubiquitinyl-[E2 ubiquitin-conjugating enzyme]-L-cysteine.. It functions in the pathway protein modification; protein ubiquitination. In terms of biological role, accepts the ubiquitin from the E1 complex and catalyzes its covalent attachment to other proteins. The chain is Ubiquitin-conjugating enzyme 15 (UBC15) from Arabidopsis thaliana (Mouse-ear cress).